Consider the following 159-residue polypeptide: ATP-dependent Clp protease adapter protein CLPS1, chloroplastic (159 aa).

Residues 1–44 constitute a chloroplast transit peptide; sequence METAICGRLALAPSSLFNSKSGDKHLVSKGPCVNRSILMTLSTS.

The protein belongs to the ClpS family. As to quaternary structure, interacts with CLPC1 (via N-terminus) and CLPC2, but not with CLPt1 or CLPT2. Binds to ClpF; this interaction stimulates their association with ClpC. As to expression, expressed exclusively in photosynthetic green tissues with high levels in young, developing leaf tissues.

It localises to the plastid. It is found in the chloroplast stroma. Its function is as follows. Small adapter protein that modulate the activity of CLPC. Involved in plastid biogenesis in particular when chloroplast protein synthesis capacity is a limiting factor. Probably involved in substrate selection for plastid Clp protease system. Recruitment to ClpC chaperones is facilitated by CLPF thus forming a binary adapter for selective substrate recognition and delivery to plastid Clp protease system (CLPC). The protein is ATP-dependent Clp protease adapter protein CLPS1, chloroplastic of Arabidopsis thaliana (Mouse-ear cress).